The chain runs to 161 residues: Arginine repressor (161 aa).

It belongs to the ArgR family.

Its subcellular location is the cytoplasm. The protein operates within amino-acid biosynthesis; L-arginine biosynthesis [regulation]. Functionally, regulates arginine biosynthesis genes. The chain is Arginine repressor from Corynebacterium aurimucosum (strain ATCC 700975 / DSM 44827 / CIP 107346 / CN-1) (Corynebacterium nigricans).